We begin with the raw amino-acid sequence, 492 residues long: ATP synthase subunit beta, plastid (492 aa).

170 to 177 is a binding site for ATP; that stretch reads GGAGVGKT.

This sequence belongs to the ATPase alpha/beta chains family. In terms of assembly, F-type ATPases have 2 components, CF(1) - the catalytic core - and CF(0) - the membrane proton channel. CF(1) has five subunits: alpha(3), beta(3), gamma(1), delta(1), epsilon(1). CF(0) has four main subunits: a(1), b(1), b'(1) and c(9-12).

The protein localises to the plastid membrane. The catalysed reaction is ATP + H2O + 4 H(+)(in) = ADP + phosphate + 5 H(+)(out). In terms of biological role, produces ATP from ADP in the presence of a proton gradient across the membrane. The catalytic sites are hosted primarily by the beta subunits. The sequence is that of ATP synthase subunit beta, plastid from Aneura mirabilis (Parasitic liverwort).